A 198-amino-acid polypeptide reads, in one-letter code: Peptidyl-tRNA hydrolase (198 aa).

Position 16 (tyrosine 16) interacts with tRNA. Histidine 21 serves as the catalytic Proton acceptor. TRNA-binding residues include tyrosine 67, asparagine 69, and asparagine 115.

This sequence belongs to the PTH family. Monomer.

It localises to the cytoplasm. The enzyme catalyses an N-acyl-L-alpha-aminoacyl-tRNA + H2O = an N-acyl-L-amino acid + a tRNA + H(+). Its function is as follows. Hydrolyzes ribosome-free peptidyl-tRNAs (with 1 or more amino acids incorporated), which drop off the ribosome during protein synthesis, or as a result of ribosome stalling. Catalyzes the release of premature peptidyl moieties from peptidyl-tRNA molecules trapped in stalled 50S ribosomal subunits, and thus maintains levels of free tRNAs and 50S ribosomes. The sequence is that of Peptidyl-tRNA hydrolase from Gloeobacter violaceus (strain ATCC 29082 / PCC 7421).